We begin with the raw amino-acid sequence, 42 residues long: Serine/threonine-protein phosphatase 5 (42 aa).

Residues glutamine 38 to methionine 42 are required for autoinhibition.

The protein belongs to the PPP phosphatase family. PP-5 (PP-T) subfamily. Probably forms a complex composed of chaperones HSP90 and HSP70, co-chaperones STIP1/HOP, CDC37, PPP5C, PTGES3/p23, TSC1 and client protein TSC2. Probably forms a complex composed of chaperones HSP90 and HSP70, co-chaperones CDC37, PPP5C, TSC1 and client protein TSC2, CDK4, AKT, RAF1 and NR3C1; this complex does not contain co-chaperones STIP1/HOP and PTGES3/p23. Part of a complex with HSP90/HSP90AA1 and steroid receptors. Interacts (via TPR repeats) with HSP90AA1 (via TPR repeat-binding motif) or HSPA1A/HSPA1B; the interaction is direct and activates the phosphatase activity. Dissociates from HSPA1A/HSPA1B and HSP90AA1 in response to arachidonic acid. Interacts with CPNE1 (via VWFA domain). Interacts with CDC16, CDC27. Interacts with KLHDC10 (via the 6 Kelch repeats); inhibits the phosphatase activity on MAP3K5. Interacts with ATM and ATR; both interactions are induced by DNA damage and enhance ATM and ATR kinase activity. Interacts with RAD17; reduced by DNA damage. Interacts with nuclear receptors such as NR3C1/GCR and PPARG (activated by agonist); regulates their transactivation activities. Interacts (via TPR repeats) with S100 proteins S100A1, S100A2, S100A6, S100B and S100P; the interactions are calcium-dependent, strongly activate PPP5C phosphatase activity and compete with HSP90AA1 and MAP3K5 interactions. Interacts with SMAD2 and SMAD3 but not with SMAD1; decreases SMAD3 phosphorylation and protein levels. Interacts (via TPR repeats) with CRY1 and CRY2; the interaction with CRY2 down-regulates the phosphatase activity on CSNK1E. Interacts (via TPR repeats) with the active form of RAC1, GNA12 or GNA13; these interactions activate the phosphatase activity and translocate PPP5C to the cell membrane. Interacts with FLCN. It depends on Mg(2+) as a cofactor. Requires Mn(2+) as cofactor. Activated by at least two different proteolytic cleavages producing a 56 kDa and a 50 kDa form.

It is found in the nucleus. Its subcellular location is the cytoplasm. The protein localises to the cell membrane. The catalysed reaction is O-phospho-L-seryl-[protein] + H2O = L-seryl-[protein] + phosphate. It catalyses the reaction O-phospho-L-threonyl-[protein] + H2O = L-threonyl-[protein] + phosphate. Its activity is regulated as follows. Autoinhibited. In the autoinhibited state, the TPR domain interacts with the catalytic region and prevents substrate access to the catalytic pocket. Allosterically activated by various polyunsaturated fatty acids, free long-chain fatty-acids and long-chain fatty acyl-CoA esters, arachidonic acid being the most effective activator. HSP90A and probably RAC1, GNA12 and GNA13 can also release the autoinhibition by the TPR repeat. Activation by RAC1, GNA12 and GNA13 is synergistic with the one produced by fatty acids binding. Inhibited by okadaic acid. Functionally, serine/threonine-protein phosphatase that dephosphorylates a myriad of proteins involved in different signaling pathways including the kinases CSNK1E, ASK1/MAP3K5, PRKDC and RAF1, the nuclear receptors NR3C1, PPARG, ESR1 and ESR2, SMAD proteins and TAU/MAPT. Implicated in wide ranging cellular processes, including apoptosis, differentiation, DNA damage response, cell survival, regulation of ion channels or circadian rhythms, in response to steroid and thyroid hormones, calcium, fatty acids, TGF-beta as well as oxidative and genotoxic stresses. Participates in the control of DNA damage response mechanisms such as checkpoint activation and DNA damage repair through, for instance, the regulation ATM/ATR-signaling and dephosphorylation of PRKDC and TP53BP1. Inhibits ASK1/MAP3K5-mediated apoptosis induced by oxidative stress. Plays a positive role in adipogenesis, mainly through the dephosphorylation and activation of PPARG transactivation function. Also dephosphorylates and inhibits the anti-adipogenic effect of NR3C1. Regulates the circadian rhythms, through the dephosphorylation and activation of CSNK1E. May modulate TGF-beta signaling pathway by the regulation of SMAD3 phosphorylation and protein expression levels. Dephosphorylates and may play a role in the regulation of TAU/MAPT. Through their dephosphorylation, may play a role in the regulation of ions channels such as KCNH2. Dephosphorylate FNIP1, disrupting interaction with HSP90AA1/Hsp90. In Oryctolagus cuniculus (Rabbit), this protein is Serine/threonine-protein phosphatase 5 (PPP5C).